The sequence spans 177 residues: Large ribosomal subunit protein uL6 (177 aa).

The protein belongs to the universal ribosomal protein uL6 family. In terms of assembly, part of the 50S ribosomal subunit.

This protein binds to the 23S rRNA, and is important in its secondary structure. It is located near the subunit interface in the base of the L7/L12 stalk, and near the tRNA binding site of the peptidyltransferase center. The protein is Large ribosomal subunit protein uL6 of Enterobacter sp. (strain 638).